Reading from the N-terminus, the 317-residue chain is sn-1-specific diacylglycerol lipase ABHD11 (317 aa).

A mitochondrion-targeting transit peptide spans 1–20; that stretch reads MSNFAMSALCRVFTRGAPCG. The 236-residue stretch at 69 to 304 folds into the AB hydrolase-1 domain; that stretch reads PLVFLHGLFG…ASHWIHADKP (236 aa). Active-site charge relay system residues include serine 142, glutamate 238, and histidine 297.

The protein belongs to the AB hydrolase superfamily. Phosphorylated.

It is found in the mitochondrion. The protein resides in the mitochondrion matrix. It carries out the reaction 1-octadecanoyl-2-(5Z,8Z,11Z,14Z-eicosatetraenoyl)-sn-glycerol + H2O = 2-(5Z,8Z,11Z,14Z-eicosatetraenoyl)-glycerol + octadecanoate + H(+). The enzyme catalyses a 1,2-diacyl-sn-glycerol + H2O = a 2-acylglycerol + a fatty acid + H(+). It catalyses the reaction a 1,3-diacyl-sn-glycerol + H2O = a 1-acyl-sn-glycerol + a fatty acid + H(+). The catalysed reaction is 1-octadecanoyl-2-(9Z-octadecenoyl)-sn-glycerol + H2O = 2-(9Z-octadecenoyl)-glycerol + octadecanoate + H(+). It carries out the reaction 1-octadecanoyl-2-(4Z,7Z,10Z,13Z,16Z,19Z-docosahexaenoyl)-sn-glycerol + H2O = 2-(4Z,7Z,10Z,13Z,16Z,19Z-docosahexaenoyl)-glycerol + octadecanoate + H(+). The enzyme catalyses 1,2-didecanoylglycerol + H2O = decanoylglycerol + decanoate + H(+). Functionally, catalyzes the hydrolysis of diacylglycerol in vitro and may function as a key regulator in lipid metabolism, namely by regulating the intracellular levels of diacylglycerol. 1,2-diacyl-sn-glycerols are the preferred substrate over 1,3-diacyl-sn-glycerols. The enzyme hydrolyzes stearate in preference to palmitate from the sn-1 position of 1,2-diacyl-sn-glycerols. This Danio rerio (Zebrafish) protein is sn-1-specific diacylglycerol lipase ABHD11.